The sequence spans 414 residues: TBC domain-containing protein C1778.09 (414 aa).

Residues glycine 158–glycine 343 form the Rab-GAP TBC domain.

The protein localises to the cytoplasm. It is found in the nucleus. This is TBC domain-containing protein C1778.09 from Schizosaccharomyces pombe (strain 972 / ATCC 24843) (Fission yeast).